Reading from the N-terminus, the 415-residue chain is Runt-related transcription factor 3 (415 aa).

Disordered regions lie at residues 1 to 48, 176 to 266, and 375 to 415; these read MRIP…GGRA, GPRE…FPDP, and NLMN…WRPY. Residues 54–182 form the Runt domain; it reads SMVDVLADHA…TVDGPREPRR (129 aa). Basic and acidic residues predominate over residues 186-205; that stretch reads KLEDQTKPFPDRFGDLERLR. K192 participates in a covalent cross-link: Glycyl lysine isopeptide (Lys-Gly) (interchain with G-Cter in SUMO2). The span at 209 to 240 shows a compositional bias: polar residues; that stretch reads TPSTPSPRGSLSTTSHFSSQPQTPIQGTSELN. S243 bears the Phosphoserine mark. The span at 393-402 shows a compositional bias: polar residues; sequence SHSNSPTALS. A compositionally biased stretch (basic and acidic residues) spans 406–415; it reads RMDEAVWRPY.

In terms of assembly, heterodimer with CBFB. RUNX3 binds DNA as a monomer and through the Runt domain. DNA-binding is increased by heterodimerization. Interacts with TLE1 and SUV39H1. The tyrosine phosphorylated form (via runt domain) interacts with SRC (via protein kinase domain). Interacts with FYN and LCK. Interacts with FOXP3. Interacts with ZFHX3. Interacts with TBX21. Phosphorylated on tyrosine residues by SRC. Phosphorylated by LCK and FYN. As to expression, expressed in gastric cancer tissues (at protein level).

The protein resides in the nucleus. It localises to the cytoplasm. Its function is as follows. Forms the heterodimeric complex core-binding factor (CBF) with CBFB. RUNX members modulate the transcription of their target genes through recognizing the core consensus binding sequence 5'-TGTGGT-3', or very rarely, 5'-TGCGGT-3', within their regulatory regions via their runt domain, while CBFB is a non-DNA-binding regulatory subunit that allosterically enhances the sequence-specific DNA-binding capacity of RUNX. The heterodimers bind to the core site of a number of enhancers and promoters, including murine leukemia virus, polyomavirus enhancer, T-cell receptor enhancers, LCK, IL3 and GM-CSF promoters. May be involved in the control of cellular proliferation and/or differentiation. In association with ZFHX3, up-regulates CDKN1A promoter activity following TGF-beta stimulation. CBF complexes repress ZBTB7B transcription factor during cytotoxic (CD8+) T cell development. They bind to RUNX-binding sequence within the ZBTB7B locus acting as transcriptional silencer and allowing for cytotoxic T cell differentiation. CBF complexes binding to the transcriptional silencer is essential for recruitment of nuclear protein complexes that catalyze epigenetic modifications to establish epigenetic ZBTB7B silencing. Necessary for the development and survival of sensory neurons expressing parvalbumin. In Homo sapiens (Human), this protein is Runt-related transcription factor 3 (RUNX3).